Here is a 487-residue protein sequence, read N- to C-terminus: ATP synthase subunit beta, plastid (487 aa).

ATP is bound at residue 169-176; it reads GGAGVGKT.

It belongs to the ATPase alpha/beta chains family. As to quaternary structure, F-type ATPases have 2 components, CF(1) - the catalytic core - and CF(0) - the membrane proton channel. CF(1) has five subunits: alpha(3), beta(3), gamma(1), delta(1), epsilon(1). CF(0) has four main subunits: a(1), b(1), b'(1) and c(9-12).

It is found in the plastid membrane. The enzyme catalyses ATP + H2O + 4 H(+)(in) = ADP + phosphate + 5 H(+)(out). Functionally, produces ATP from ADP in the presence of a proton gradient across the membrane. The catalytic sites are hosted primarily by the beta subunits. The polypeptide is ATP synthase subunit beta, plastid (atpB) (Cuscuta pentagona (Five-angled dodder)).